A 180-amino-acid chain; its full sequence is MDNIAILEALLYTSGDEGLEQKQIIDILDINLNQLEDLVSKYHSHGLTIQRYGSTYVLTTKKETSTYIEQLVKEKSKMKLSQAAMETLSIIAYNQPLTRGDIEMIRGINSDGAVKTLIARGLVEAKDVDHSRSHHLITTDLFLNVFGIENLDALPTTEEDEAEMDEFFSNLVNQKGESNE.

The protein belongs to the ScpB family. In terms of assembly, homodimer. Homodimerization may be required to stabilize the binding of ScpA to the Smc head domains. Component of a cohesin-like complex composed of ScpA, ScpB and the Smc homodimer, in which ScpA and ScpB bind to the head domain of Smc. The presence of the three proteins is required for the association of the complex with DNA.

It localises to the cytoplasm. Its function is as follows. Participates in chromosomal partition during cell division. May act via the formation of a condensin-like complex containing Smc and ScpA that pull DNA away from mid-cell into both cell halves. The sequence is that of Segregation and condensation protein B from Staphylococcus epidermidis (strain ATCC 35984 / DSM 28319 / BCRC 17069 / CCUG 31568 / BM 3577 / RP62A).